Here is a 136-residue protein sequence, read N- to C-terminus: Small ribosomal subunit protein uS8c (136 aa).

Belongs to the universal ribosomal protein uS8 family. In terms of assembly, part of the 30S ribosomal subunit.

Its subcellular location is the plastid. The protein resides in the chloroplast. In terms of biological role, one of the primary rRNA binding proteins, it binds directly to 16S rRNA central domain where it helps coordinate assembly of the platform of the 30S subunit. The polypeptide is Small ribosomal subunit protein uS8c (rps8) (Hordeum vulgare (Barley)).